The sequence spans 308 residues: Methionyl-tRNA formyltransferase (308 aa).

110 to 113 (SLLP) is a binding site for (6S)-5,6,7,8-tetrahydrofolate.

The protein belongs to the Fmt family.

It carries out the reaction L-methionyl-tRNA(fMet) + (6R)-10-formyltetrahydrofolate = N-formyl-L-methionyl-tRNA(fMet) + (6S)-5,6,7,8-tetrahydrofolate + H(+). Its function is as follows. Attaches a formyl group to the free amino group of methionyl-tRNA(fMet). The formyl group appears to play a dual role in the initiator identity of N-formylmethionyl-tRNA by promoting its recognition by IF2 and preventing the misappropriation of this tRNA by the elongation apparatus. The sequence is that of Methionyl-tRNA formyltransferase from Neisseria meningitidis serogroup C (strain 053442).